Reading from the N-terminus, the 245-residue chain is MAGVTLTLLPAVDVADGRAVRLVQGEAGSETSYGDPLEAALTWQRDGAEWIHLVDLDAAFGRGSNRELIAEVVRSVDVAVELSGGIRDDDSLDAALATGAARVNIGTAALEDPDWVRRAIDRVGDRIAVGLDVRGTTLAARGWTQDGGELFEVLARLDADGCARYVVTDVRRDGTLTGPNVELLRSVTAVTDRPVVASGGVSALADLVAIAAVPGVEGAIVGKALYAGAFTLPEALAVTSTVVAG.

Residue D13 is the Proton acceptor of the active site. Residue D132 is the Proton donor of the active site.

This sequence belongs to the HisA/HisF family.

It localises to the cytoplasm. It catalyses the reaction 1-(5-phospho-beta-D-ribosyl)-5-[(5-phospho-beta-D-ribosylamino)methylideneamino]imidazole-4-carboxamide = 5-[(5-phospho-1-deoxy-D-ribulos-1-ylimino)methylamino]-1-(5-phospho-beta-D-ribosyl)imidazole-4-carboxamide. It participates in amino-acid biosynthesis; L-histidine biosynthesis; L-histidine from 5-phospho-alpha-D-ribose 1-diphosphate: step 4/9. This chain is 1-(5-phosphoribosyl)-5-[(5-phosphoribosylamino)methylideneamino] imidazole-4-carboxamide isomerase, found in Frankia alni (strain DSM 45986 / CECT 9034 / ACN14a).